We begin with the raw amino-acid sequence, 734 residues long: Putative protocadherin beta-18 (734 aa).

5 Cadherin domains span residues 1-79 (MWKT…TPTF), 80-188 (LNNH…APEF), 189-293 (EKPV…PPEI), 294-398 (AMTS…APIF), and 399-508 (TQTS…SPFV). A glycan (N-linked (GlcNAc...) asparagine) is linked at asparagine 115. Residues asparagine 365 and asparagine 383 are each glycosylated (N-linked (GlcNAc...) asparagine). Asparagine 514 is a glycosylation site (N-linked (GlcNAc...) asparagine). Residues 515–621 (GSAPCTELVP…GFSQPYLPLT (107 aa)) enclose the Cadherin 6 domain. Residues 638–658 (VVALASVSSLFLFSVFLFVAV) traverse the membrane as a helical segment.

Its subcellular location is the cell membrane. Functionally, potential calcium-dependent cell-adhesion protein. This is Putative protocadherin beta-18 (PCDHB18P) from Homo sapiens (Human).